The sequence spans 894 residues: Pentatricopeptide repeat-containing protein At1g19720 (894 aa).

PPR repeat units lie at residues lysine 80–phenylalanine 110, aspartate 114–arginine 144, asparagine 145–proline 179, aspartate 180–serine 214, cysteine 215–arginine 245, aspartate 246–proline 280, glycine 281–alanine 315, aspartate 316–proline 350, asparagine 351–aspartate 385, aspartate 386–lysine 416, aspartate 417–proline 451, asparagine 452–glutamine 486, asparagine 488–proline 522, asparagine 523–alanine 557, isoleucine 558–lysine 588, aspartate 589–proline 623, asparagine 624–proline 659, and alanine 660–proline 694. Residues isoleucine 695–arginine 770 form a type E motif region. The interval asparagine 771 to asparagine 801 is type E(+) motif. Residues serine 803–tryptophan 894 form a type DYW motif region.

The protein belongs to the PPR family. PCMP-H subfamily.

The polypeptide is Pentatricopeptide repeat-containing protein At1g19720 (DYW7) (Arabidopsis thaliana (Mouse-ear cress)).